The sequence spans 668 residues: Acyl-CoA-binding domain-containing protein 4 (668 aa).

The ACB domain occupies 12-106 (YPERFYAAAS…LEEDDPGWYS (95 aa)). An acyl-CoA contacts are provided by residues Lys33, 48 to 52 (YALYQ), and Lys74. Kelch repeat units follow at residues 195-242 (KMYI…TLLA), 255-305 (KLLS…MVGK), 307-356 (LVIF…VHAE), 358-407 (FLLI…TIGE), 408-456 (NWFI…LVVS), and 463-508 (VLVA…VNNA). Phosphoserine is present on residues Ser515 and Ser520. Residues 538–647 (KVEGNSERII…EQAAMNAKRQ (110 aa)) are a coiled coil. The interval 639–668 (QAAMNAKRQGSGGVWGWLAGSPQEKDDDSP) is disordered.

It belongs to the ACBP family. In terms of assembly, interacts with RAP2-3/EBP, an ethylene-responsive element binding protein. Mostly expressed in roots, stems, and leaves, and, to a lower extent, in flowers and siliques.

The protein resides in the cytoplasm. In terms of biological role, binds medium- and long-chain acyl-CoA esters with very high affinity. Can interact in vitro with oleoyl-CoA, barely with palmitoyl-CoA, but not with arachidonyl-CoA. May function as an intracellular carrier of acyl-CoA esters. Plays a role in the biosynthesis of membrane lipids including galactolipids and phospholipids. The polypeptide is Acyl-CoA-binding domain-containing protein 4 (ACBP4) (Arabidopsis thaliana (Mouse-ear cress)).